A 328-amino-acid chain; its full sequence is 4-hydroxy-3-methylbut-2-enyl diphosphate reductase (328 aa).

A [4Fe-4S] cluster-binding site is contributed by cysteine 24. The (2E)-4-hydroxy-3-methylbut-2-enyl diphosphate site is built by histidine 55 and histidine 88. Residues histidine 55 and histidine 88 each contribute to the dimethylallyl diphosphate site. Isopentenyl diphosphate contacts are provided by histidine 55 and histidine 88. Position 110 (cysteine 110) interacts with [4Fe-4S] cluster. Histidine 138 provides a ligand contact to (2E)-4-hydroxy-3-methylbut-2-enyl diphosphate. Histidine 138 serves as a coordination point for dimethylallyl diphosphate. Histidine 138 lines the isopentenyl diphosphate pocket. Glutamate 140 serves as the catalytic Proton donor. Threonine 178 contributes to the (2E)-4-hydroxy-3-methylbut-2-enyl diphosphate binding site. Cysteine 208 contacts [4Fe-4S] cluster. Positions 236, 237, 238, and 279 each coordinate (2E)-4-hydroxy-3-methylbut-2-enyl diphosphate. 4 residues coordinate dimethylallyl diphosphate: serine 236, serine 237, asparagine 238, and serine 279. Isopentenyl diphosphate-binding residues include serine 236, serine 237, asparagine 238, and serine 279.

The protein belongs to the IspH family. [4Fe-4S] cluster is required as a cofactor.

It catalyses the reaction isopentenyl diphosphate + 2 oxidized [2Fe-2S]-[ferredoxin] + H2O = (2E)-4-hydroxy-3-methylbut-2-enyl diphosphate + 2 reduced [2Fe-2S]-[ferredoxin] + 2 H(+). It carries out the reaction dimethylallyl diphosphate + 2 oxidized [2Fe-2S]-[ferredoxin] + H2O = (2E)-4-hydroxy-3-methylbut-2-enyl diphosphate + 2 reduced [2Fe-2S]-[ferredoxin] + 2 H(+). Its pathway is isoprenoid biosynthesis; dimethylallyl diphosphate biosynthesis; dimethylallyl diphosphate from (2E)-4-hydroxy-3-methylbutenyl diphosphate: step 1/1. The protein operates within isoprenoid biosynthesis; isopentenyl diphosphate biosynthesis via DXP pathway; isopentenyl diphosphate from 1-deoxy-D-xylulose 5-phosphate: step 6/6. Functionally, catalyzes the conversion of 1-hydroxy-2-methyl-2-(E)-butenyl 4-diphosphate (HMBPP) into a mixture of isopentenyl diphosphate (IPP) and dimethylallyl diphosphate (DMAPP). Acts in the terminal step of the DOXP/MEP pathway for isoprenoid precursor biosynthesis. This is 4-hydroxy-3-methylbut-2-enyl diphosphate reductase from Ehrlichia ruminantium (strain Gardel).